The sequence spans 238 residues: uncharacterized protein (238 aa).

This sequence belongs to the HyuE racemase family.

This is an uncharacterized protein from Schizosaccharomyces pombe (strain 972 / ATCC 24843) (Fission yeast).